A 159-amino-acid polypeptide reads, in one-letter code: Cathelicidin-5 (159 aa).

The signal sequence occupies residues 1–29; that stretch reads METQRASLSLGRWSLWLLLLGLALPSASA. Gln30 is subject to Pyrrolidone carboxylic acid. A propeptide spanning residues 30-131 is cleaved from the precursor; it reads QALSYREAVL…DITCAVPQSV (102 aa). 2 disulfide bridges follow: Cys86–Cys97 and Cys108–Cys125.

Belongs to the cathelicidin family.

The protein localises to the secreted. In terms of biological role, exerts a potent antimicrobial activity against Gram-negative and Gram-positive bacteria, including methicillin-resistant Staphylococcus aureus, and fungi. This is Cathelicidin-5 (CATHL5) from Bos taurus (Bovine).